Here is a 303-residue protein sequence, read N- to C-terminus: N-acetyl-D-glucosamine kinase (303 aa).

ATP is bound by residues Gly4–Lys11 and Gly133–Leu140. Zn(2+)-binding residues include His157, Cys177, Cys179, and Cys184.

The protein belongs to the ROK (NagC/XylR) family. NagK subfamily.

The enzyme catalyses N-acetyl-D-glucosamine + ATP = N-acetyl-D-glucosamine 6-phosphate + ADP + H(+). The protein operates within cell wall biogenesis; peptidoglycan recycling. In terms of biological role, catalyzes the phosphorylation of N-acetyl-D-glucosamine (GlcNAc) derived from cell-wall degradation, yielding GlcNAc-6-P. The protein is N-acetyl-D-glucosamine kinase of Salmonella dublin (strain CT_02021853).